Here is a 122-residue protein sequence, read N- to C-terminus: Small ribosomal subunit protein bS16 (122 aa).

Positions 85–122 (REAKNNPIKAKPGKRAQERAAEKAQKAADAAAAADAAE) are disordered. Residues 99-110 (RAQERAAEKAQK) are compositionally biased toward basic and acidic residues. Over residues 111–122 (AADAAAAADAAE) the composition is skewed to low complexity.

It belongs to the bacterial ribosomal protein bS16 family.

The sequence is that of Small ribosomal subunit protein bS16 from Rhizobium etli (strain ATCC 51251 / DSM 11541 / JCM 21823 / NBRC 15573 / CFN 42).